Here is a 265-residue protein sequence, read N- to C-terminus: 4-hydroxy-tetrahydrodipicolinate reductase (265 aa).

Residues 7–12 (GASGRM) and Asp33 contribute to the NAD(+) site. Arg34 lines the NADP(+) pocket. NAD(+) is bound by residues 96–98 (GTT) and 120–123 (AANM). His153 (proton donor/acceptor) is an active-site residue. His154 contributes to the (S)-2,3,4,5-tetrahydrodipicolinate binding site. Lys157 acts as the Proton donor in catalysis. 163-164 (GT) is a binding site for (S)-2,3,4,5-tetrahydrodipicolinate.

The protein belongs to the DapB family.

It localises to the cytoplasm. The enzyme catalyses (S)-2,3,4,5-tetrahydrodipicolinate + NAD(+) + H2O = (2S,4S)-4-hydroxy-2,3,4,5-tetrahydrodipicolinate + NADH + H(+). It catalyses the reaction (S)-2,3,4,5-tetrahydrodipicolinate + NADP(+) + H2O = (2S,4S)-4-hydroxy-2,3,4,5-tetrahydrodipicolinate + NADPH + H(+). The protein operates within amino-acid biosynthesis; L-lysine biosynthesis via DAP pathway; (S)-tetrahydrodipicolinate from L-aspartate: step 4/4. In terms of biological role, catalyzes the conversion of 4-hydroxy-tetrahydrodipicolinate (HTPA) to tetrahydrodipicolinate. The chain is 4-hydroxy-tetrahydrodipicolinate reductase from Burkholderia vietnamiensis (strain G4 / LMG 22486) (Burkholderia cepacia (strain R1808)).